A 115-amino-acid chain; its full sequence is MVSRKAVAALLVVHAPAMLASQTEAFVPIFTYGELQRMQEKERSKGQKKSLSVWQRSGEEGPVDPAEPIEEEGNEMIKLTAPLEIGMRMNSRQLEKYRAALEGLLSEMLPQHAAK.

Residues 1 to 25 (MVSRKAVAALLVVHAPAMLASQTEA) form the signal peptide. Residues 40-74 (EKERSKGQKKSLSVWQRSGEEGPVDPAEPIEEEGN) are disordered.

The protein belongs to the motilin family.

The protein localises to the secreted. Its function is as follows. Plays an important role in the regulation of interdigestive gastrointestinal motility and indirectly causes rhythmic contraction of duodenal and colonic smooth muscle. The sequence is that of Promotilin (MLN) from Macaca mulatta (Rhesus macaque).